Here is an 80-residue protein sequence, read N- to C-terminus: MATKKPENMSFEATIEELDNLVDQLENGDLALDDALKKFERGIALARASQAKLTEAEQRVSILLSDSDDAPLSDFSTLAE.

The protein belongs to the XseB family. Heterooligomer composed of large and small subunits.

Its subcellular location is the cytoplasm. It catalyses the reaction Exonucleolytic cleavage in either 5'- to 3'- or 3'- to 5'-direction to yield nucleoside 5'-phosphates.. Bidirectionally degrades single-stranded DNA into large acid-insoluble oligonucleotides, which are then degraded further into small acid-soluble oligonucleotides. The protein is Exodeoxyribonuclease 7 small subunit of Vibrio vulnificus (strain CMCP6).